Here is a 317-residue protein sequence, read N- to C-terminus: 2-keto-3-deoxygluconate permease 1 (317 aa).

10 consecutive transmembrane segments (helical) span residues Val-10–Pro-30, Ala-47–Ala-67, Leu-82–Phe-102, Gly-106–Gly-126, Val-134–Gly-154, Ala-159–Leu-179, Pro-195–Leu-215, Gly-217–Ile-237, Ile-248–Ala-268, and Ala-279–Leu-299.

This sequence belongs to the KdgT transporter family.

The protein localises to the cell inner membrane. It catalyses the reaction 2-dehydro-3-deoxy-D-gluconate(in) + H(+)(in) = 2-dehydro-3-deoxy-D-gluconate(out) + H(+)(out). Catalyzes the proton-dependent uptake of 2-keto-3-deoxygluconate (KDG) into the cell. The chain is 2-keto-3-deoxygluconate permease 1 from Salmonella typhi.